The primary structure comprises 492 residues: Virion host shutoff protein (492 aa).

Disordered stretches follow at residues 110 to 130 (EEASDVDASPPPSPITDSRPS), 143 to 165 (FAPGDRGTRAAGPGPAAPSGAPS), 288 to 307 (SQARRAARRERANSRSLESM), and 334 to 369 (EDDYEEDPPLQPPDVAGGPRDGARSSSSEILTPPEL). The segment covering 144 to 165 (APGDRGTRAAGPGPAAPSGAPS) has biased composition (low complexity).

This sequence belongs to the herpesviridae VHS protein family. Interacts with human EIF4H, EIF4A1 and EIF4A2; interaction with eIF4AI and EIF4A2 presumably allows Vhs protein to associate with the eIF4F cap-binding complex.

The protein resides in the virion. Minor structural protein that acts as an endoribonuclease during lytic infection. Degrades host mRNAs in the cytoplasm by cutting them at preferred sites, including some in regions of translation initiation. Together with inhibition of host splicing by ICP27, contributes to an overall decrease in host protein synthesis. Also, after the onset of viral transcription, accelerates the turnover of viral mRNA, thereby facilitating the sequential expression of different classes of viral genes. Binds translation initiation factors eIF4H, eIF4AI, and eIF4AII, thereby may interact directly with the translation initiation complex and thus digest specifically mRNAs. Also impedes antigen presentation by major histocompatibility complex class I and class II molecules, inhibits secretion of cytokines that would otherwise recruit lymphocytes and neutrophils cells to the site of infection and blocks the activation of dendritic cells. Impedes the alpha/beta interferon-mediated response to infection. Inhibits the integrated stress response (ISR) in the infected cell, this function requires the endonuclease activity. Stress granule formation is thus inhibited, which allows protein synthesis and viral replication. In Human herpesvirus 2 (strain G) (HHV-2), this protein is Virion host shutoff protein (UL41).